The chain runs to 289 residues: Phospholipase A1 (289 aa).

Residues 1-20 (MRTLQGWLLPVFMLPMAVYA) form the signal peptide. The Periplasmic segment spans residues 21–52 (QEATVKEVHDAPAVRGSIIANMLQEHDNPFTL). A beta stranded transmembrane segment spans residues 53–65 (YPYDTNYLIYTQT). Residues 66–84 (SDLNKEAIASYDWAENARK) lie on the Extracellular side of the membrane. A beta stranded transmembrane segment spans residues 85–99 (DEVKFQLSLAFPLWR). Topologically, residues 100–105 (GILGPN) are periplasmic. The beta stranded transmembrane segment at 106-118 (SVLGASYTQKSWW) threads the bilayer. The Extracellular segment spans residues 119–128 (QLSNSEESSP). Residue S126 coordinates Ca(2+). The chain crosses the membrane as a beta stranded span at residues 129–148 (FRETNYEPQLFLGFATDYRF). The Periplasmic portion of the chain corresponds to 149 to 150 (AG). Residues 151 to 164 (WTLRDVEMGYNHDS) traverse the membrane as a beta stranded segment. H162 serves as the catalytic Proton acceptor. S164 acts as the Nucleophile in catalysis. Over 165–173 (NGRSDPTSR) the chain is Extracellular. 2 residues coordinate Ca(2+): R167 and S172. A beta stranded membrane pass occupies residues 174 to 186 (SWNRLYTRLMAEN). The Periplasmic segment spans residues 187–188 (GN). The chain crosses the membrane as a beta stranded span at residues 189–198 (WLVEVKPWYV). Topologically, residues 199–216 (VGNTDDNPDITKYMGYYQ) are extracellular. D204 contacts Ca(2+). The beta stranded transmembrane segment at 217-223 (LKIGYHL) threads the bilayer. The Periplasmic portion of the chain corresponds to 224–225 (GD). The chain crosses the membrane as a beta stranded span at residues 226-234 (AVLSAKGQY). Topologically, residues 235–241 (NWNTGYG) are extracellular. The chain crosses the membrane as a beta stranded span at residues 242–250 (GAELGLSYP). Over 251 to 255 (ITKHV) the chain is Periplasmic. A beta stranded transmembrane segment spans residues 256-265 (RLYTQVYSGY). The Extracellular segment spans residues 266–274 (GESLIDYNF). A beta stranded membrane pass occupies residues 275-286 (NQTRVGVGVMLN). Topologically, residues 287 to 289 (DLF) are periplasmic.

The protein belongs to the phospholipase A1 family. In terms of assembly, homodimer; dimerization is reversible, and the dimeric form is the active one. Ca(2+) serves as cofactor.

It is found in the cell outer membrane. It carries out the reaction a 1,2-diacyl-sn-glycero-3-phosphocholine + H2O = a 2-acyl-sn-glycero-3-phosphocholine + a fatty acid + H(+). The enzyme catalyses a 1,2-diacyl-sn-glycero-3-phosphocholine + H2O = a 1-acyl-sn-glycero-3-phosphocholine + a fatty acid + H(+). Functionally, hydrolysis of phosphatidylcholine with phospholipase A2 (EC 3.1.1.4) and phospholipase A1 (EC 3.1.1.32) activities. This is Phospholipase A1 (pldA) from Escherichia coli O157:H7.